We begin with the raw amino-acid sequence, 312 residues long: Cytochrome f (312 aa).

A signal peptide spans 1-30; sequence MYLSKNFFLNLKTFIFSFFVLCFFSQSAQA. Heme-binding residues include Tyr31, Cys51, Cys54, and His55. A helical membrane pass occupies residues 278–298; that stretch reads VQGLLLFSLFILLAQIFLVLK.

Belongs to the cytochrome f family. In terms of assembly, the 4 large subunits of the cytochrome b6-f complex are cytochrome b6, subunit IV (17 kDa polypeptide, petD), cytochrome f and the Rieske protein, while the 4 small subunits are PetG, PetL, PetM and PetN. The complex functions as a dimer. The cofactor is heme.

The protein localises to the plastid. The protein resides in the chloroplast thylakoid membrane. Functionally, component of the cytochrome b6-f complex, which mediates electron transfer between photosystem II (PSII) and photosystem I (PSI), cyclic electron flow around PSI, and state transitions. The chain is Cytochrome f (petA) from Bigelowiella natans (Pedinomonas minutissima).